A 386-amino-acid polypeptide reads, in one-letter code: Phosphoglycerate kinase (386 aa).

Residues 21 to 23 (DLN), R36, 59 to 62 (HLGR), R113, and R146 each bind substrate. ATP contacts are provided by residues K197, E314, and 340–343 (GGDT).

The protein belongs to the phosphoglycerate kinase family. Monomer.

It localises to the cytoplasm. It catalyses the reaction (2R)-3-phosphoglycerate + ATP = (2R)-3-phospho-glyceroyl phosphate + ADP. Its pathway is carbohydrate degradation; glycolysis; pyruvate from D-glyceraldehyde 3-phosphate: step 2/5. The polypeptide is Phosphoglycerate kinase (Ectopseudomonas mendocina (strain ymp) (Pseudomonas mendocina)).